We begin with the raw amino-acid sequence, 414 residues long: Serine hydroxymethyltransferase (414 aa).

(6S)-5,6,7,8-tetrahydrofolate is bound by residues Leu116 and 120-122 (GHL). Lys224 carries the N6-(pyridoxal phosphate)lysine modification. Residues Glu240 and 348-350 (SPF) contribute to the (6S)-5,6,7,8-tetrahydrofolate site.

The protein belongs to the SHMT family. As to quaternary structure, homodimer. Requires pyridoxal 5'-phosphate as cofactor.

It is found in the cytoplasm. It carries out the reaction (6R)-5,10-methylene-5,6,7,8-tetrahydrofolate + glycine + H2O = (6S)-5,6,7,8-tetrahydrofolate + L-serine. The protein operates within one-carbon metabolism; tetrahydrofolate interconversion. It functions in the pathway amino-acid biosynthesis; glycine biosynthesis; glycine from L-serine: step 1/1. Functionally, catalyzes the reversible interconversion of serine and glycine with tetrahydrofolate (THF) serving as the one-carbon carrier. This reaction serves as the major source of one-carbon groups required for the biosynthesis of purines, thymidylate, methionine, and other important biomolecules. Also exhibits THF-independent aldolase activity toward beta-hydroxyamino acids, producing glycine and aldehydes, via a retro-aldol mechanism. This chain is Serine hydroxymethyltransferase, found in Campylobacter jejuni (strain RM1221).